The sequence spans 286 residues: Bifunctional protein FolD (286 aa).

Residues 165–167 (GRS), Ser-190, and Val-231 each bind NADP(+).

The protein belongs to the tetrahydrofolate dehydrogenase/cyclohydrolase family. As to quaternary structure, homodimer.

It carries out the reaction (6R)-5,10-methylene-5,6,7,8-tetrahydrofolate + NADP(+) = (6R)-5,10-methenyltetrahydrofolate + NADPH. The catalysed reaction is (6R)-5,10-methenyltetrahydrofolate + H2O = (6R)-10-formyltetrahydrofolate + H(+). Its pathway is one-carbon metabolism; tetrahydrofolate interconversion. In terms of biological role, catalyzes the oxidation of 5,10-methylenetetrahydrofolate to 5,10-methenyltetrahydrofolate and then the hydrolysis of 5,10-methenyltetrahydrofolate to 10-formyltetrahydrofolate. In Bacillus cereus (strain G9842), this protein is Bifunctional protein FolD.